Here is a 166-residue protein sequence, read N- to C-terminus: tRNA-acetylating toxin (166 aa).

Positions 1 to 22 are disordered; the sequence is MSGYSAPRRISDADDVTSFSSG. The 162-residue stretch at 1–162 folds into the N-acetyltransferase domain; it reads MSGYSAPRRI…LMLLMKDARA (162 aa). Residue Tyr138 is part of the active site.

Belongs to the acetyltransferase family. GNAT subfamily. As to quaternary structure, homodimer, forms a complex with cognate antitoxin TacA.

It carries out the reaction glycyl-tRNA(Gly) + acetyl-CoA = N-acetylglycyl-tRNA(Gly) + CoA + H(+). Toxic component of a type II toxin-antitoxin (TA) system. Overexpression of this gene alone in M.smegmatis inhibits growth, while overexpression of the tacA-tacT operon does not. Acetylates glycyl-tRNA(Gly) but not other tRNAs, blocks in vitro translation in the presence, but not absence, of acetyl-coenzyme A. Peptidyl-tRNA hydrolase (pth) counteracts the product of this enzyme in vitro. Neutralized by cognate antitoxin TacA. Does not seem to be active in laboratory growth conditions. Functionally, tacA-TacT both represses and derepresses expression of its own operon. This is tRNA-acetylating toxin from Mycobacterium tuberculosis (strain ATCC 25618 / H37Rv).